Consider the following 92-residue polypeptide: Small ribosomal subunit protein uS19 (92 aa).

Belongs to the universal ribosomal protein uS19 family.

Protein S19 forms a complex with S13 that binds strongly to the 16S ribosomal RNA. This Borrelia hermsii (strain HS1 / DAH) protein is Small ribosomal subunit protein uS19.